We begin with the raw amino-acid sequence, 406 residues long: O-succinylhomoserine sulfhydrylase (406 aa).

Lys-219 carries the N6-(pyridoxal phosphate)lysine modification.

The protein belongs to the trans-sulfuration enzymes family. MetZ subfamily. In terms of assembly, homotetramer. Pyridoxal 5'-phosphate serves as cofactor.

The catalysed reaction is O-succinyl-L-homoserine + hydrogen sulfide = L-homocysteine + succinate. It participates in amino-acid biosynthesis; L-methionine biosynthesis via de novo pathway; L-homocysteine from O-succinyl-L-homoserine: step 1/1. Its function is as follows. Catalyzes the formation of L-homocysteine from O-succinyl-L-homoserine (OSHS) and hydrogen sulfide. In Mycobacterium tuberculosis (strain CDC 1551 / Oshkosh), this protein is O-succinylhomoserine sulfhydrylase.